The following is a 462-amino-acid chain: Annexin A7 (462 aa).

Residues Met-1–Pro-130 form a disordered region. The interval Gln-7 to Pro-131 is 19 X 6 AA tandem repeats of Q-G-Y-P-P-Q. Positions Pro-16–Pro-130 are enriched in low complexity. Annexin repeat units lie at residues His-161 to Thr-232, Glu-233 to Glu-304, Met-315 to Thr-388, and Asn-392 to Ser-462.

Belongs to the annexin family.

Functionally, calcium/phospholipid-binding protein which promotes membrane fusion and is involved in exocytosis. This is Annexin A7 (nxnA) from Dictyostelium discoideum (Social amoeba).